Consider the following 270-residue polypeptide: Phosphatidylglycerol--prolipoprotein diacylglyceryl transferase (270 aa).

4 helical membrane passes run 19 to 39 (FPVY…LWLA), 56 to 76 (LVLI…VIFE), 92 to 112 (QGGL…ILFA), and 116 to 136 (GVSF…GQAI). Arg-138 is a binding site for a 1,2-diacyl-sn-glycero-3-phospho-(1'-sn-glycerol). The next 3 membrane-spanning stretches (helical) occupy residues 178-198 (HPTF…LLAL), 206-226 (GELF…VEGL), and 236-256 (LRIA…FIIV).

The protein belongs to the Lgt family.

Its subcellular location is the cell membrane. It carries out the reaction L-cysteinyl-[prolipoprotein] + a 1,2-diacyl-sn-glycero-3-phospho-(1'-sn-glycerol) = an S-1,2-diacyl-sn-glyceryl-L-cysteinyl-[prolipoprotein] + sn-glycerol 1-phosphate + H(+). The protein operates within protein modification; lipoprotein biosynthesis (diacylglyceryl transfer). Its function is as follows. Catalyzes the transfer of the diacylglyceryl group from phosphatidylglycerol to the sulfhydryl group of the N-terminal cysteine of a prolipoprotein, the first step in the formation of mature lipoproteins. The sequence is that of Phosphatidylglycerol--prolipoprotein diacylglyceryl transferase from Bacillus cereus (strain ZK / E33L).